A 92-amino-acid polypeptide reads, in one-letter code: Small ribosomal subunit protein bS20 (92 aa).

The segment covering 1–11 (MANIKSQKKRI) has biased composition (basic residues). Positions 1–22 (MANIKSQKKRIRQNEKARLRNK) are disordered.

This sequence belongs to the bacterial ribosomal protein bS20 family.

Its function is as follows. Binds directly to 16S ribosomal RNA. The chain is Small ribosomal subunit protein bS20 from Thermobifida fusca (strain YX).